The chain runs to 312 residues: Pyrimidine-specific ribonucleoside hydrolase RihA (312 aa).

Residue histidine 240 is part of the active site.

It belongs to the IUNH family. RihA subfamily.

Its function is as follows. Hydrolyzes cytidine or uridine to ribose and cytosine or uracil, respectively. The protein is Pyrimidine-specific ribonucleoside hydrolase RihA of Citrobacter koseri (strain ATCC BAA-895 / CDC 4225-83 / SGSC4696).